A 1009-amino-acid chain; its full sequence is DNA polymerase catalytic subunit (1009 aa).

Belongs to the DNA polymerase type-B family.

It localises to the host nucleus. The catalysed reaction is DNA(n) + a 2'-deoxyribonucleoside 5'-triphosphate = DNA(n+1) + diphosphate. In Saimiri sciureus (Common squirrel monkey), this protein is DNA polymerase catalytic subunit (9).